The following is a 459-amino-acid chain: MAASASAAAGEEDWVLPSEVEVLESIYLDELQVIKGNGRTSPWEIYITLHPATAEDQDSQYVCFTLVLQVPAEYPHEVPQISIRNPRGLSDEQIHTILQVLGHVAKAGLGTAMLYELIEKGKEILTDNNIPHGQCVICLYGFQEKEAFTKTPCYHYFHCHCLARYIQHMEQELKAQGQEQEQERQHATTKQKAVGVQCPVCREPLVYDLASLKAAPEPQQPMELYQPSAESLRQQEERKRLYQRQQERGGIIDLEAERNRYFISLQQPPAPAEPESAVDVSKGSQPPSTLAAELSTSPAVQSTLPPPLPVATQHICEKIPGTRSNQQRLGETQKAMLDPPKPSRGPWRQPERRHPKGGECHAPKGTRDTQELPPPEGPLKEPMDLKPEPHSQGVEGPPQEKGPGSWQGPPPRRTRDCVRWERSKGRTPGSSYPRLPRGQGAYRPGTRRESLGLESKDGS.

An RWD domain is found at 18 to 128 (SEVEVLESIY…EKGKEILTDN (111 aa)). Zn(2+) is bound by residues C135, C138, C153, H155, H158, C161, C198, and C201. An RING-type zinc finger spans residues 135 to 202 (CVICLYGFQE…AVGVQCPVCR (68 aa)). Disordered stretches follow at residues 268–309 (PPAP…PPLP) and 322–459 (TRSN…KDGS). Over residues 282-303 (KGSQPPSTLAAELSTSPAVQST) the composition is skewed to polar residues. Basic and acidic residues-rich tracts occupy residues 349-370 (QPERRHPKGGECHAPKGTRDTQ), 378-389 (PLKEPMDLKPEP), 413-424 (RTRDCVRWERSK), and 446-459 (TRRESLGLESKDGS). S450 bears the Phosphoserine mark.

It belongs to the RNF25 family. As to quaternary structure, interacts with UBE2D2, and may also interact with UBE2E1 and UBE2E3. Interacts with RELA/p65. Ubiquitinated; autoubiquitinated.

It is found in the cytoplasm. It carries out the reaction S-ubiquitinyl-[E2 ubiquitin-conjugating enzyme]-L-cysteine + [acceptor protein]-L-lysine = [E2 ubiquitin-conjugating enzyme]-L-cysteine + N(6)-ubiquitinyl-[acceptor protein]-L-lysine.. The protein operates within protein modification; protein ubiquitination. In terms of biological role, E3 ubiquitin-protein ligase that plays a key role in the RNF14-RNF25 translation quality control pathway, a pathway that takes place when a ribosome has stalled during translation, and which promotes ubiquitination and degradation of translation factors on stalled ribosomes. Catalyzes ubiquitination of RPS27A in response to ribosome collisions, promoting activation of RNF14. RNF25 catalyzes ubiquitination of other ribosomal proteins on stalled ribosomes, such as RPL0, RPL1, RPL12, RPS13 and RPS17. Also involved in ubiquitination and degradation of stalled ETF1/eRF1. Independently of its function in the response to stalled ribosomes, mediates ubiquitination and subsequent proteasomal degradation of NKD2. May also stimulate transcription mediated by NF-kappa-B via its interaction with RELA/p65. The protein is E3 ubiquitin-protein ligase RNF25 of Homo sapiens (Human).